Reading from the N-terminus, the 288-residue chain is Phenazine biosynthesis-like domain-containing protein (288 aa).

Residue E46 is part of the active site.

It belongs to the PhzF family. In terms of assembly, interacts with UNRIP/MAWD.

The polypeptide is Phenazine biosynthesis-like domain-containing protein (Pbld) (Rattus norvegicus (Rat)).